A 757-amino-acid polypeptide reads, in one-letter code: MLSSVCVSSFRGRQGASKQQPAPPPQPPESPPPPPLPPQQQQPAQPGPAASPAGPPAPRGPGDRRAEPCPGLPAAAMGRHGGGGGDSGKIVINVGGVRHETYRSTLRTLPGTRLAGLTEPEAAARFDYDPGADEFFFDRHPGVFAYVLNYYRTGKLHCPADVCGPLFEEELGFWGIDETDVEACCWMTYRQHRDAEEALDSFEAPDPAGAANAANAAGAHDGGLDDEAGAGGGGLDGAGGELKRLCFQDAGGGAGGPPGGAGGAGGTWWRRWQPRVWALFEDPYSSRAARYVAFASLFFILISITTFCLETHEGFIHISNKTVTQASPIPGAPPENITNVEVETEPFLTYVEGVCVVWFTFEFLMRITFCPDKVEFLKSSLNIIDCVAILPFYLEVGLSGLSSKAAKDVLGFLRVVRFVRILRIFKLTRHFVGLRVLGHTLRASTNEFLLLIIFLALGVLIFATMIYYAERIGADPDDILGSNHTYFKNIPIGFWWAVVTMTTLGYGDMYPKTWSGMLVGALCALAGVLTIAMPVPVIVNNFGMYYSLAMAKQKLPKKKNKHIPRPPQPGSPNYCKPDPPPPPPPHPHHGSGGISPPPPITPPSMGVTVAGAYPAGPHTHPGLLRGGAGGLGIMGLPPLPAPGEPCPLAQEEVIEINRADPRPNGDPAAAALAHEDCPAIDQPAMSPEDKSPITPGSRGRYSRDRACFLLTDYAPSPDGSIRKATGAPPLPPQDWRKPGPPSFLPDLNANAAAWISP.

The segment at 1–78 is important for normal N-type inactivation; sequence MLSSVCVSSF…CPGLPAAAMG (78 aa). Residues 1 to 87 form a disordered region; the sequence is MLSSVCVSSF…GRHGGGGGDS (87 aa). Residues 1 to 290 lie on the Cytoplasmic side of the membrane; it reads MLSSVCVSSF…EDPYSSRAAR (290 aa). A compositionally biased stretch (pro residues) spans 21 to 40; it reads PAPPPQPPESPPPPPLPPQQ. Over residues 41 to 52 the composition is skewed to low complexity; it reads QQPAQPGPAASP. Residues His157, Cys163, Cys184, and Cys185 each contribute to the Zn(2+) site. The span at 210–219 shows a compositional bias: low complexity; sequence AANAANAAGA. The tract at residues 210-232 is disordered; it reads AANAANAAGAHDGGLDDEAGAGG. A helical membrane pass occupies residues 291 to 309; sequence YVAFASLFFILISITTFCL. Asn320 and Asn336 each carry an N-linked (GlcNAc...) asparagine glycan. A helical membrane pass occupies residues 351–370; it reads VEGVCVVWFTFEFLMRITFC. At 371 to 379 the chain is on the cytoplasmic side; that stretch reads PDKVEFLKS. Residues 380-398 traverse the membrane as a helical segment; that stretch reads SLNIIDCVAILPFYLEVGL. A helical; Voltage-sensor transmembrane segment spans residues 412–434; sequence FLRVVRFVRILRIFKLTRHFVGL. Over 435-447 the chain is Cytoplasmic; the sequence is RVLGHTLRASTNE. A helical membrane pass occupies residues 448 to 469; that stretch reads FLLLIIFLALGVLIFATMIYYA. Residue Asn483 is glycosylated (N-linked (GlcNAc...) asparagine). Residues Thr503, Leu504, Gly505, and Tyr506 each contribute to the K(+) site. The short motif at 503–508 is the Selectivity filter element; sequence TLGYGD. Residues 518 to 539 traverse the membrane as a helical segment; sequence LVGALCALAGVLTIAMPVPVIV. Over 540–757 the chain is Cytoplasmic; sequence NNFGMYYSLA…NANAAAWISP (218 aa). A disordered region spans residues 556-613; sequence PKKKNKHIPRPPQPGSPNYCKPDPPPPPPPHPHHGSGGISPPPPITPPSMGVTVAGAY. Arg625 is subject to Omega-N-methylarginine. Residues 682-746 form a disordered region; it reads QPAMSPEDKS…KPGPPSFLPD (65 aa). A phosphoserine mark is found at Ser686 and Ser691. Residues 728-743 are compositionally biased toward pro residues; it reads PPLPPQDWRKPGPPSF.

This sequence belongs to the potassium channel family. C (Shaw) (TC 1.A.1.2) subfamily. Kv3.3/KCNC3 sub-subfamily. As to quaternary structure, homotetramer. Heterotetramer with KCNC1. Interacts (via C-terminus) with HAX1; this interaction modulates channel gating. Identified in a complex with ACTR3, a subunit of the Arp2/3 complex; this interaction is indirect and depends on the presence of HAX1. N-glycosylated.

It localises to the cell membrane. It is found in the presynaptic cell membrane. The protein resides in the perikaryon. The protein localises to the cell projection. Its subcellular location is the axon. It localises to the dendrite. It is found in the dendritic spine membrane. The protein resides in the cytoplasm. The protein localises to the cell cortex. Its subcellular location is the cytoskeleton. It carries out the reaction K(+)(in) = K(+)(out). Voltage-gated potassium channel that plays an important role in the rapid repolarization of fast-firing brain neurons. The channel opens in response to the voltage difference across the membrane, forming a potassium-selective channel through which potassium ions pass in accordance with their electrochemical gradient. The channel displays rapid activation and inactivation kinetics. It plays a role in the regulation of the frequency, shape and duration of action potentials in Purkinje cells. Required for normal survival of cerebellar neurons, probably via its role in regulating the duration and frequency of action potentials that in turn regulate the activity of voltage-gated Ca(2+) channels and cellular Ca(2+) homeostasis. Required for normal motor function. Plays a role in the reorganization of the cortical actin cytoskeleton and the formation of actin veil structures in neuronal growth cones via its interaction with HAX1 and the Arp2/3 complex. The protein is Voltage-gated potassium channel KCNC3 (KCNC3) of Homo sapiens (Human).